The primary structure comprises 116 residues: Ribosome-binding factor A (116 aa).

The protein belongs to the RbfA family. Monomer. Binds 30S ribosomal subunits, but not 50S ribosomal subunits or 70S ribosomes.

The protein localises to the cytoplasm. In terms of biological role, one of several proteins that assist in the late maturation steps of the functional core of the 30S ribosomal subunit. Associates with free 30S ribosomal subunits (but not with 30S subunits that are part of 70S ribosomes or polysomes). Required for efficient processing of 16S rRNA. May interact with the 5'-terminal helix region of 16S rRNA. This Ureaplasma urealyticum serovar 10 (strain ATCC 33699 / Western) protein is Ribosome-binding factor A.